A 657-amino-acid chain; its full sequence is Kinesin-like protein KIF22 (657 aa).

The disordered stretch occupies residues 1–33; that stretch reads MNVRAKKKPQQREMASASSGPSRSLSKGGVSRR. Low complexity predominate over residues 16–33; that stretch reads SASSGPSRSLSKGGVSRR. The Kinesin motor domain maps to 38 to 360; that stretch reads RVRVAVRLRP…LNFTARSKEV (323 aa). Residue 119 to 126 participates in ATP binding; the sequence is GPTGAGKT. The interval 388–415 is disordered; sequence PSEAKKAKGPEEESTGSPESTAAPASAS. The span at 402–415 shows a compositional bias: low complexity; that stretch reads TGSPESTAAPASAS. 3 positions are modified to phosphoserine: S404, S419, and S444. A Glycyl lysine isopeptide (Lys-Gly) (interchain with G-Cter in SUMO2) cross-link involves residue K457. Positions 457 to 502 form a coiled coil; it reads KRERMVLIKTVEEKNLEIERLKMKQKELEAKVLAQEALDPKEKENT. A phosphoserine mark is found at S537, S554, and S573.

This sequence belongs to the TRAFAC class myosin-kinesin ATPase superfamily. Kinesin family. In terms of assembly, interacts with FAM83D and SIAH1. Ubiquitinated; mediated by SIAH1 and leading to its subsequent proteasomal degradation.

The protein localises to the nucleus. It is found in the cytoplasm. Its subcellular location is the cytoskeleton. Its function is as follows. Kinesin family member that is involved in spindle formation and the movements of chromosomes during mitosis and meiosis. Binds to microtubules and to DNA. Plays a role in congression of laterally attached chromosomes in NDC80-depleted cells. This Rattus norvegicus (Rat) protein is Kinesin-like protein KIF22 (Kif22).